Here is a 397-residue protein sequence, read N- to C-terminus: Elongation factor Tu (397 aa).

Residues 10–206 form the tr-type G domain; sequence KPHVNIGTIG…AVDEAIPTPP (197 aa). The tract at residues 19 to 26 is G1; sequence GHIDHGKT. 19–26 is a binding site for GTP; sequence GHIDHGKT. Thr-26 lines the Mg(2+) pocket. Positions 62 to 66 are G2; sequence GITIS. Residues 83–86 are G3; it reads DCPG. GTP-binding positions include 83–87 and 138–141; these read DCPGH and NKAD. Positions 138–141 are G4; the sequence is NKAD. Residues 176–178 form a G5 region; that stretch reads SAL.

This sequence belongs to the TRAFAC class translation factor GTPase superfamily. Classic translation factor GTPase family. EF-Tu/EF-1A subfamily. As to quaternary structure, monomer.

The protein localises to the cytoplasm. The catalysed reaction is GTP + H2O = GDP + phosphate + H(+). Its function is as follows. GTP hydrolase that promotes the GTP-dependent binding of aminoacyl-tRNA to the A-site of ribosomes during protein biosynthesis. The protein is Elongation factor Tu of Kitasatospora aureofaciens (Streptomyces aureofaciens).